Here is a 748-residue protein sequence, read N- to C-terminus: WD repeat-containing protein 91 (748 aa).

A coiled-coil region spans residues 183–228 (QRTNQVQEENEVLRQKLFALQAEIHRLKKEEQQQEEEAAALVQHKL). Ser257 carries the phosphoserine modification. A compositionally biased stretch (low complexity) spans 266 to 279 (LLPQSKKSPSRLSP). Residues 266–368 (LLPQSKKSPS…PEVSGAEAEP (103 aa)) are disordered. Positions 284–300 (PQAQSSAKKDSFSSQAT) are enriched in polar residues. 2 positions are modified to phosphoserine: Ser289 and Ser294. Residues 333 to 344 (RLQDHGKERREL) are compositionally biased toward basic and acidic residues. A compositionally biased stretch (polar residues) spans 345–354 (LSTSSSQSQC). WD repeat units lie at residues 407 to 446 (EHHS…QTKA), 449 to 489 (ISKS…NLCE), 512 to 556 (VCSA…QQLQ), 561 to 600 (PEPI…CAMS), 603 to 642 (AHCG…LKVS), 665 to 703 (VQVP…KVLE), and 710 to 748 (GHRA…AHKL).

Belongs to the WD repeat WDR91 family. In terms of assembly, interacts with WDR81; involved in early to late endosome cargo transport. Interacts with BECN1; negatively regulates the PI3 kinase/PI3K activity associated with endosomal membranes.

It localises to the early endosome membrane. Its subcellular location is the late endosome membrane. Functionally, functions as a negative regulator of the PI3 kinase/PI3K activity associated with endosomal membranes via BECN1, a core subunit of the PI3K complex. By modifying the phosphatidylinositol 3-phosphate/PtdInsP3 content of endosomal membranes may regulate endosome fusion, recycling, sorting and early to late endosome transport. It is for instance, required for the delivery of cargos like BST2/tetherin from early to late endosome and thereby participates indirectly to their degradation by the lysosome. May play a role in meiosis. The polypeptide is WD repeat-containing protein 91 (Mus musculus (Mouse)).